The primary structure comprises 616 residues: Chaperone protein HscA (616 aa).

It belongs to the heat shock protein 70 family.

Functionally, chaperone involved in the maturation of iron-sulfur cluster-containing proteins. Has a low intrinsic ATPase activity which is markedly stimulated by HscB. Involved in the maturation of IscU. The chain is Chaperone protein HscA from Salmonella heidelberg (strain SL476).